The primary structure comprises 614 residues: UvrABC system protein C (614 aa).

In terms of domain architecture, GIY-YIG spans 14–91; sequence TSPGCYIHKD…IKENKPKYNI (78 aa). A UVR domain is found at 196–231; sequence DKIIDDLKSKMAVAAQSMEFERAAEYRDLIQAIGTL. Residues 595–614 form a disordered region; the sequence is LPQVAEERVDYQTEGNHNEP. Basic and acidic residues predominate over residues 599 to 614; that stretch reads AEERVDYQTEGNHNEP.

Belongs to the UvrC family. As to quaternary structure, interacts with UvrB in an incision complex.

Its subcellular location is the cytoplasm. Its function is as follows. The UvrABC repair system catalyzes the recognition and processing of DNA lesions. UvrC both incises the 5' and 3' sides of the lesion. The N-terminal half is responsible for the 3' incision and the C-terminal half is responsible for the 5' incision. This Streptococcus pneumoniae serotype 4 (strain ATCC BAA-334 / TIGR4) protein is UvrABC system protein C.